We begin with the raw amino-acid sequence, 232 residues long: Small ribosomal subunit protein uS3 (232 aa).

Residues 39–107 form the KH type-2 domain; that stretch reads VRQYLTKELK…PAQINIAEVR (69 aa).

It belongs to the universal ribosomal protein uS3 family. As to quaternary structure, part of the 30S ribosomal subunit. Forms a tight complex with proteins S10 and S14.

Functionally, binds the lower part of the 30S subunit head. Binds mRNA in the 70S ribosome, positioning it for translation. The protein is Small ribosomal subunit protein uS3 of Aliivibrio salmonicida (strain LFI1238) (Vibrio salmonicida (strain LFI1238)).